The following is a 384-amino-acid chain: 1-deoxy-D-xylulose 5-phosphate reductoisomerase (384 aa).

Positions 10, 11, 12, 13, 37, and 124 each coordinate NADPH. K125 contributes to the 1-deoxy-D-xylulose 5-phosphate binding site. E126 contacts NADPH. D150 contacts Mn(2+). Positions 151, 152, 176, and 199 each coordinate 1-deoxy-D-xylulose 5-phosphate. E152 contributes to the Mn(2+) binding site. G205 provides a ligand contact to NADPH. 1-deoxy-D-xylulose 5-phosphate contacts are provided by S212, N217, K218, and E221. E221 contacts Mn(2+).

Belongs to the DXR family. Mg(2+) is required as a cofactor. Mn(2+) serves as cofactor.

It carries out the reaction 2-C-methyl-D-erythritol 4-phosphate + NADP(+) = 1-deoxy-D-xylulose 5-phosphate + NADPH + H(+). The protein operates within isoprenoid biosynthesis; isopentenyl diphosphate biosynthesis via DXP pathway; isopentenyl diphosphate from 1-deoxy-D-xylulose 5-phosphate: step 1/6. Functionally, catalyzes the NADPH-dependent rearrangement and reduction of 1-deoxy-D-xylulose-5-phosphate (DXP) to 2-C-methyl-D-erythritol 4-phosphate (MEP). This is 1-deoxy-D-xylulose 5-phosphate reductoisomerase from Clostridium tetani (strain Massachusetts / E88).